The sequence spans 132 residues: Small ribosomal subunit protein uS8 (132 aa).

The protein belongs to the universal ribosomal protein uS8 family. In terms of assembly, part of the 30S ribosomal subunit. Contacts proteins S5 and S12.

Its function is as follows. One of the primary rRNA binding proteins, it binds directly to 16S rRNA central domain where it helps coordinate assembly of the platform of the 30S subunit. The chain is Small ribosomal subunit protein uS8 from Acetivibrio thermocellus (strain ATCC 27405 / DSM 1237 / JCM 9322 / NBRC 103400 / NCIMB 10682 / NRRL B-4536 / VPI 7372) (Clostridium thermocellum).